Reading from the N-terminus, the 237-residue chain is MALSGGDDQVPPGGPMTVSTRLIDAGSTIMQRRLPVKQMNTHVSTFAIYGGDMSRLIGTHHYVHRVNDEFLQCAVYASDRSDAPLIGIEYVISDRLYETLSEDEQKLWHSHAYEVKSGSWAYPRLPEVVAAPELKNIAKTYGKFWCTWQIDRGDKLPMGAPELMMSPQGVGQGVLRPELVKRRDEKYNISTDDLKHTRAEIAEPEWINPMADYWKQHGKCFVLDIATVEMNRHAQFP.

Belongs to the OBAP family.

This is Oil body-associated protein 2C from Arabidopsis thaliana (Mouse-ear cress).